A 717-amino-acid polypeptide reads, in one-letter code: Patatin-like phospholipase domain-containing protein AO090003000839 (717 aa).

Residues W87–T107 form a helical membrane-spanning segment. The PNPLA domain maps to L277–N468. The GXSXG motif lies at G308 to G312. Residue S310 is the Nucleophile of the active site. D455 (proton acceptor) is an active-site residue. The tract at residues V620–R696 is disordered. Residues M639 to L658 are compositionally biased toward basic and acidic residues. The span at D660–S673 shows a compositional bias: low complexity.

This sequence belongs to the PLPL family.

Its subcellular location is the membrane. Probable lipid hydrolase. This chain is Patatin-like phospholipase domain-containing protein AO090003000839, found in Aspergillus oryzae (strain ATCC 42149 / RIB 40) (Yellow koji mold).